We begin with the raw amino-acid sequence, 258 residues long: Ubiquinone/menaquinone biosynthesis C-methyltransferase UbiE (258 aa).

Positions 1–20 (MSESRTSADGGMETSYGFRE) are disordered. S-adenosyl-L-methionine contacts are provided by residues T81, D102, and 130 to 131 (NA).

Belongs to the class I-like SAM-binding methyltransferase superfamily. MenG/UbiE family.

It carries out the reaction a 2-demethylmenaquinol + S-adenosyl-L-methionine = a menaquinol + S-adenosyl-L-homocysteine + H(+). The enzyme catalyses a 2-methoxy-6-(all-trans-polyprenyl)benzene-1,4-diol + S-adenosyl-L-methionine = a 5-methoxy-2-methyl-3-(all-trans-polyprenyl)benzene-1,4-diol + S-adenosyl-L-homocysteine + H(+). The protein operates within quinol/quinone metabolism; menaquinone biosynthesis; menaquinol from 1,4-dihydroxy-2-naphthoate: step 2/2. Its pathway is cofactor biosynthesis; ubiquinone biosynthesis. Functionally, methyltransferase required for the conversion of demethylmenaquinol (DMKH2) to menaquinol (MKH2) and the conversion of 2-polyprenyl-6-methoxy-1,4-benzoquinol (DDMQH2) to 2-polyprenyl-3-methyl-6-methoxy-1,4-benzoquinol (DMQH2). The polypeptide is Ubiquinone/menaquinone biosynthesis C-methyltransferase UbiE (Rhizobium etli (strain ATCC 51251 / DSM 11541 / JCM 21823 / NBRC 15573 / CFN 42)).